Consider the following 510-residue polypeptide: AAA-ATPase At3g28540 (510 aa).

The chain crosses the membrane as a helical span at residues 7–25 (LFGFTGTTMASLMFFWSVY). 246 to 253 (GPPGTGKS) lines the ATP pocket. The tract at residues 460 to 510 (KEKAKKLAEEEKMKKAARDARRIKKKAEEEHKKKNKVEENGDVSHDNGNHI) is disordered.

It belongs to the AAA ATPase family. BCS1 subfamily. It depends on Mg(2+) as a cofactor.

It localises to the membrane. It catalyses the reaction ATP + H2O = ADP + phosphate + H(+). This chain is AAA-ATPase At3g28540, found in Arabidopsis thaliana (Mouse-ear cress).